The following is a 71-amino-acid chain: Protein SlyX homolog (71 aa).

This sequence belongs to the SlyX family.

This is Protein SlyX homolog from Stutzerimonas stutzeri (strain A1501) (Pseudomonas stutzeri).